The sequence spans 54 residues: Beta-2-microglobulin (54 aa).

The Ig-like C1-type domain maps to 3-41; the sequence is KVELSDLSFNKDWSFYLLAHREFVPTATDKYACRVSHIT.

This sequence belongs to the beta-2-microglobulin family. Heterodimer of an alpha chain and a beta chain. Beta-2-microglobulin is the beta-chain of major histocompatibility complex class I molecules.

Its subcellular location is the secreted. Functionally, component of the class I major histocompatibility complex (MHC). Involved in the presentation of peptide antigens to the immune system. The protein is Beta-2-microglobulin (B2M) of Mesocricetus auratus (Golden hamster).